We begin with the raw amino-acid sequence, 67 residues long: Epsilon-conotoxin TxVA (67 aa).

Residues Met1–Cys19 form the signal peptide. Positions Phe20 to Arg50 are excised as a propeptide. 4-carboxyglutamate is present on residues Glu51 and Glu54. 2 disulfide bridges follow: Cys52–Cys58 and Cys53–Cys59. Trp57 is subject to 6'-bromotryptophan. A glycan (O-linked (GalNAc...) threonine) is linked at Thr60. Position 63 is a 4-hydroxyproline (Pro63). Residues Leu64–Arg67 constitute a propeptide that is removed on maturation.

In terms of processing, O-glycan consists of the disaccharide Gal-GalNAc. Expressed by the venom duct.

The protein localises to the secreted. Its function is as follows. Epsilon-conotoxins act at presynaptic membranes, blocking the calcium channels or G protein-coupled receptors. Causes hyperactivity upon intracranial injection into mice. Causes dorsal fins drooping in fish. This Conus textile (Cloth-of-gold cone) protein is Epsilon-conotoxin TxVA.